The sequence spans 391 residues: Polysialic acid biosynthesis protein P7 (391 aa).

Functionally, may be involved in the synthesis of polysialic acid (PSA). This chain is Polysialic acid biosynthesis protein P7 (neuC), found in Escherichia coli.